We begin with the raw amino-acid sequence, 496 residues long: DNA-directed DNA/RNA polymerase mu (496 aa).

The tract at residues 1 to 22 is disordered; sequence MLPKRRRVRAGSPHSAVASSTP. Ser-12 carries the phosphoserine modification. The span at 12–22 shows a compositional bias: low complexity; it reads SPHSAVASSTP. The region spanning 23–122 is the BRCT domain; the sequence is PSVVRFPDVA…QPVPEEGRHH (100 aa). Positions 241 and 243 each coordinate Na(+). Residues 323-332 form an involved in ssDNA binding region; the sequence is RGKLQGHDVD. Mg(2+)-binding residues include Asp-330, Asp-332, and Asp-420.

It belongs to the DNA polymerase type-X family. It depends on Mg(2+) as a cofactor.

It is found in the nucleus. The catalysed reaction is DNA(n) + a 2'-deoxyribonucleoside 5'-triphosphate = DNA(n+1) + diphosphate. Functionally, gap-filling polymerase involved in repair of DNA double-strand breaks by non-homologous end joining (NHEJ). Participates in immunoglobulin (Ig) light chain gene rearrangement in V(D)J recombination. The sequence is that of DNA-directed DNA/RNA polymerase mu (Polm) from Mus musculus (Mouse).